A 214-amino-acid polypeptide reads, in one-letter code: Small ribosomal subunit protein uS5 (214 aa).

The 64-residue stretch at 54-117 (LRYDIVDIGI…RDAKMRIIPV (64 aa)) folds into the S5 DRBM domain.

This sequence belongs to the universal ribosomal protein uS5 family. In terms of assembly, part of the 30S ribosomal subunit. Contacts protein S4.

Its function is as follows. With S4 and S12 plays an important role in translational accuracy. This Sulfolobus acidocaldarius (strain ATCC 33909 / DSM 639 / JCM 8929 / NBRC 15157 / NCIMB 11770) protein is Small ribosomal subunit protein uS5.